A 119-amino-acid chain; its full sequence is Large ribosomal subunit protein bL20 (119 aa).

Belongs to the bacterial ribosomal protein bL20 family.

Its function is as follows. Binds directly to 23S ribosomal RNA and is necessary for the in vitro assembly process of the 50S ribosomal subunit. It is not involved in the protein synthesizing functions of that subunit. In Nitrobacter winogradskyi (strain ATCC 25391 / DSM 10237 / CIP 104748 / NCIMB 11846 / Nb-255), this protein is Large ribosomal subunit protein bL20.